Consider the following 66-residue polypeptide: Dermaseptin PD-3-7 (66 aa).

A signal peptide spans 1-22 (MSFMKKSLLLVLFLGVVSLSNC). A propeptide spanning residues 23–40 (EEEKGENENEDHEEHHEE) is cleaved from the precursor.

In terms of tissue distribution, expressed by the skin glands.

It is found in the secreted. Its function is as follows. Possesses a potent antimicrobial activity against Gram-positive and Gram-negative bacteria. Probably acts by disturbing membrane functions with its amphipathic structure. This is Dermaseptin PD-3-7 from Agalychnis dacnicolor (Giant Mexican leaf frog).